The sequence spans 883 residues: Phosphoenolpyruvate carboxylase (883 aa).

Catalysis depends on residues histidine 138 and lysine 546.

The protein belongs to the PEPCase type 1 family. Requires Mg(2+) as cofactor.

The enzyme catalyses oxaloacetate + phosphate = phosphoenolpyruvate + hydrogencarbonate. Forms oxaloacetate, a four-carbon dicarboxylic acid source for the tricarboxylic acid cycle. This is Phosphoenolpyruvate carboxylase from Salmonella schwarzengrund (strain CVM19633).